We begin with the raw amino-acid sequence, 138 residues long: ATP synthase epsilon chain (138 aa).

It belongs to the ATPase epsilon chain family. F-type ATPases have 2 components, CF(1) - the catalytic core - and CF(0) - the membrane proton channel. CF(1) has five subunits: alpha(3), beta(3), gamma(1), delta(1), epsilon(1). CF(0) has three main subunits: a, b and c.

The protein resides in the cell inner membrane. In terms of biological role, produces ATP from ADP in the presence of a proton gradient across the membrane. The polypeptide is ATP synthase epsilon chain (Trichlorobacter lovleyi (strain ATCC BAA-1151 / DSM 17278 / SZ) (Geobacter lovleyi)).